Reading from the N-terminus, the 118-residue chain is Large ribosomal subunit protein bL20 (118 aa).

Belongs to the bacterial ribosomal protein bL20 family.

Binds directly to 23S ribosomal RNA and is necessary for the in vitro assembly process of the 50S ribosomal subunit. It is not involved in the protein synthesizing functions of that subunit. This chain is Large ribosomal subunit protein bL20, found in Pseudomonas aeruginosa (strain LESB58).